A 254-amino-acid chain; its full sequence is Diphthine synthase (254 aa).

S-adenosyl-L-methionine is bound by residues aspartate 83, leucine 86, 111-112 (SI), leucine 163, and valine 205.

This sequence belongs to the diphthine synthase family. As to quaternary structure, homodimer.

The enzyme catalyses 2-[(3S)-amino-3-carboxypropyl]-L-histidyl-[translation elongation factor 2] + 3 S-adenosyl-L-methionine = diphthine-[translation elongation factor 2] + 3 S-adenosyl-L-homocysteine + 3 H(+). It participates in protein modification; peptidyl-diphthamide biosynthesis. Its function is as follows. S-adenosyl-L-methionine-dependent methyltransferase that catalyzes the trimethylation of the amino group of the modified target histidine residue in translation elongation factor 2 (EF-2), to form an intermediate called diphthine. The three successive methylation reactions represent the second step of diphthamide biosynthesis. This chain is Diphthine synthase, found in Pyrobaculum aerophilum (strain ATCC 51768 / DSM 7523 / JCM 9630 / CIP 104966 / NBRC 100827 / IM2).